A 316-amino-acid chain; its full sequence is tRNA dimethylallyltransferase (316 aa).

Residue 17 to 24 participates in ATP binding; it reads GPTASGKT. Residue 19 to 24 coordinates substrate; it reads TASGKT. Interaction with substrate tRNA stretches follow at residues 42-45, 166-170, 247-252, and 280-287; these read DSVL, QRLSR, RCVGYR, and KRQITWLR.

This sequence belongs to the IPP transferase family. Monomer. Mg(2+) serves as cofactor.

The catalysed reaction is adenosine(37) in tRNA + dimethylallyl diphosphate = N(6)-dimethylallyladenosine(37) in tRNA + diphosphate. Its function is as follows. Catalyzes the transfer of a dimethylallyl group onto the adenine at position 37 in tRNAs that read codons beginning with uridine, leading to the formation of N6-(dimethylallyl)adenosine (i(6)A). The protein is tRNA dimethylallyltransferase of Shigella flexneri.